The sequence spans 200 residues: 3-isopropylmalate dehydratase small subunit (200 aa).

It belongs to the LeuD family. LeuD type 1 subfamily. Heterodimer of LeuC and LeuD.

It carries out the reaction (2R,3S)-3-isopropylmalate = (2S)-2-isopropylmalate. The protein operates within amino-acid biosynthesis; L-leucine biosynthesis; L-leucine from 3-methyl-2-oxobutanoate: step 2/4. Catalyzes the isomerization between 2-isopropylmalate and 3-isopropylmalate, via the formation of 2-isopropylmaleate. The chain is 3-isopropylmalate dehydratase small subunit from Yersinia pseudotuberculosis serotype O:1b (strain IP 31758).